Here is a 405-residue protein sequence, read N- to C-terminus: Replication factor C large subunit (405 aa).

47 to 54 (GPPGVGKT) lines the ATP pocket.

This sequence belongs to the activator 1 small subunits family. RfcL subfamily. Heteromultimer composed of small subunits (RfcS) and large subunits (RfcL).

Its function is as follows. Part of the RFC clamp loader complex which loads the PCNA sliding clamp onto DNA. This Saccharolobus islandicus (strain Y.N.15.51 / Yellowstone #2) (Sulfolobus islandicus) protein is Replication factor C large subunit.